The following is a 243-amino-acid chain: 1-(5-phosphoribosyl)-5-[(5-phosphoribosylamino)methylideneamino] imidazole-4-carboxamide isomerase (243 aa).

Aspartate 10 functions as the Proton acceptor in the catalytic mechanism. Aspartate 131 functions as the Proton donor in the catalytic mechanism.

It belongs to the HisA/HisF family.

It localises to the cytoplasm. It catalyses the reaction 1-(5-phospho-beta-D-ribosyl)-5-[(5-phospho-beta-D-ribosylamino)methylideneamino]imidazole-4-carboxamide = 5-[(5-phospho-1-deoxy-D-ribulos-1-ylimino)methylamino]-1-(5-phospho-beta-D-ribosyl)imidazole-4-carboxamide. It participates in amino-acid biosynthesis; L-histidine biosynthesis; L-histidine from 5-phospho-alpha-D-ribose 1-diphosphate: step 4/9. In Rhizorhabdus wittichii (strain DSM 6014 / CCUG 31198 / JCM 15750 / NBRC 105917 / EY 4224 / RW1) (Sphingomonas wittichii), this protein is 1-(5-phosphoribosyl)-5-[(5-phosphoribosylamino)methylideneamino] imidazole-4-carboxamide isomerase.